Here is a 658-residue protein sequence, read N- to C-terminus: Exoribonuclease 2 (658 aa).

The RNB domain maps to 189–531 (REDLTALHFI…NHRLIKAVLT (343 aa)). The S1 motif domain maps to 576 to 658 (KPTFQAEIQD…ETRSIVGTLC (83 aa)).

This sequence belongs to the RNR ribonuclease family. RNase II subfamily.

The protein resides in the cytoplasm. It catalyses the reaction Exonucleolytic cleavage in the 3'- to 5'-direction to yield nucleoside 5'-phosphates.. Its function is as follows. Involved in mRNA degradation. Hydrolyzes single-stranded polyribonucleotides processively in the 3' to 5' direction. This is Exoribonuclease 2 from Pasteurella multocida (strain Pm70).